Reading from the N-terminus, the 377-residue chain is Succinyl-diaminopimelate desuccinylase (377 aa).

H66 is a Zn(2+) binding site. D68 is a catalytic residue. D99 is a Zn(2+) binding site. The Proton acceptor role is filled by E133. Residues E134, E162, and H348 each contribute to the Zn(2+) site.

This sequence belongs to the peptidase M20A family. DapE subfamily. Homodimer. Requires Zn(2+) as cofactor. It depends on Co(2+) as a cofactor.

It carries out the reaction N-succinyl-(2S,6S)-2,6-diaminopimelate + H2O = (2S,6S)-2,6-diaminopimelate + succinate. It participates in amino-acid biosynthesis; L-lysine biosynthesis via DAP pathway; LL-2,6-diaminopimelate from (S)-tetrahydrodipicolinate (succinylase route): step 3/3. Catalyzes the hydrolysis of N-succinyl-L,L-diaminopimelic acid (SDAP), forming succinate and LL-2,6-diaminopimelate (DAP), an intermediate involved in the bacterial biosynthesis of lysine and meso-diaminopimelic acid, an essential component of bacterial cell walls. The sequence is that of Succinyl-diaminopimelate desuccinylase from Xylella fastidiosa (strain 9a5c).